We begin with the raw amino-acid sequence, 83 residues long: Mitochondrial import inner membrane translocase subunit Tim8 B (83 aa).

At Ala2 the chain carries N-acetylalanine. Positions Cys36 to Cys59 match the Twin CX3C motif motif. 2 cysteine pairs are disulfide-bonded: Cys36–Cys59 and Cys40–Cys55.

The protein belongs to the small Tim family. In terms of assembly, heterohexamer; possibly composed of 3 copies of TIMM8B and 3 copies of TIMM13, named soluble 70 kDa complex. Associates with the TIM22 complex, whose core is composed of TIMM22.

The protein resides in the mitochondrion inner membrane. Functionally, probable mitochondrial intermembrane chaperone that participates in the import and insertion of some multi-pass transmembrane proteins into the mitochondrial inner membrane. Also required for the transfer of beta-barrel precursors from the TOM complex to the sorting and assembly machinery (SAM complex) of the outer membrane. Acts as a chaperone-like protein that protects the hydrophobic precursors from aggregation and guide them through the mitochondrial intermembrane space. This is Mitochondrial import inner membrane translocase subunit Tim8 B (Timm8b) from Mus musculus (Mouse).